The following is a 531-amino-acid chain: Unconventional prefoldin RPB5 interactor (531 aa).

N-acetylmethionine is present on Met-1. Disordered regions lie at residues 1–24 (MEPP…APLR), 224–381 (ELES…ELPA), 408–470 (KSRS…SGVS), and 500–531 (TIPE…QQRS). Residues 13–24 (PLAEASAAAPLR) are compositionally biased toward low complexity. Polar residues-rich tracts occupy residues 257–266 (SPVTDSSAAS) and 280–296 (GQVN…NSYH). The segment covering 300–319 (DDDEEEEDDDDDDDEDDDNE) has biased composition (acidic residues). Ser-369 is subject to Phosphoserine; by RPS6KB1. Residues 414–424 (NSVCSDTSESS) show a composition bias toward polar residues. A Phosphoserine modification is found at Ser-439.

The protein belongs to the RNA polymerase II subunit 5-mediating protein family. As to quaternary structure, homodimer. Component of the PAQosome complex which is responsible for the biogenesis of several protein complexes and which consists of R2TP complex members RUVBL1, RUVBL2, RPAP3 and PIH1D1, URI complex members PFDN2, PFDN6, PDRG1, UXT and URI1 as well as ASDURF, POLR2E and DNAAF10/WDR92. Interacts with POLR2E/RPB5, RUVBL2 and RUVBL1. Interacts with PFDN2, PFDN4 and STAP1; the interactions are phosphorylation-dependent and occur in a growth-dependent manner in the mitochondrion. Interacts with UXT. Interacts with PPP1CC; the interaction is phosphorylation-dependent and occurs in a growth factor-dependent manner. Interacts (via the middle C-terminal region) with GTF2F1 and GTF2F2. Interacts with DMAP1. Interacts with TSC1 and TSC2. Interacts with PRPF8 and EFTUD2 in a ZNHIT2-dependent manner. Post-translationally, phosphorylation occurs in response to androgen treatment in prostate cancer cells in a mTOR-dependent manner. Phosphorylated; hyperhosphorylated in mitochondria in a mTORC-dependent signaling pathway. Phosphorylated at Ser-369 by RPS6KB1 in a growth factor- and rapamycin-dependent manner. S6K1-mediated mitochondrial phosphorylation at Ser-369 disrupts the URI1-PPP1CC complex in the mitochondrion, relieves PPP1CC phosphatase inhibition activity and hence engages a negative feedback diminishing RPS6KB1 kinase activity, preventing sustained S6K1-dependent signaling. Phosphorylated. Phosphorylation occurs essentially on serine residues. Expressed in the spinal cord, ganglia, choroid plexus and olfactors epithelium of the developing brain. Expressed in skin, lung, kidney, testis and muscles (at protein level). Expressed strongly in brain and kidney. Expressed weakly in skeletal muscle, lung and liver.

It localises to the nucleus. The protein resides in the cytoplasm. Its subcellular location is the mitochondrion. It is found in the cell projection. The protein localises to the dendrite. Involved in gene transcription regulation. Acts as a transcriptional repressor in concert with the corepressor UXT to regulate androgen receptor (AR) transcription. May act as a tumor suppressor to repress AR-mediated gene transcription and to inhibit anchorage-independent growth in prostate cancer cells. Required for cell survival in ovarian cancer cells. Together with UXT, associates with chromatin to the NKX3-1 promoter region. Functionally, plays a central role in maintaining S6K1 signaling and BAD phosphorylation under normal growth conditions thereby protecting cells from potential deleterious effects of sustained S6K1 signaling. The URI1-PPP1CC complex acts as a central component of a negative feedback mechanism that counteracts excessive S6K1 survival signaling to BAD in response to growth factors. Mediates inhibition of PPP1CC phosphatase activity in mitochondria. Coordinates the regulation of nutrient-sensitive gene expression availability in a mTOR-dependent manner. Seems to be a scaffolding protein able to assemble a prefoldin-like complex that contains PFDs and proteins with roles in transcription and ubiquitination. In Mus musculus (Mouse), this protein is Unconventional prefoldin RPB5 interactor (Uri1).